The chain runs to 365 residues: 3-isopropylmalate dehydrogenase (365 aa).

Position 80-91 (80-91 (GPKWGTGAVRPE)) interacts with NAD(+). Positions 98, 108, 137, and 226 each coordinate substrate. Asp-226, Asp-251, and Asp-255 together coordinate Mg(2+). 290–301 (GSAPDLPKGKVN) is an NAD(+) binding site.

The protein belongs to the isocitrate and isopropylmalate dehydrogenases family. In terms of assembly, homodimer. Mg(2+) serves as cofactor. The cofactor is Mn(2+).

It is found in the cytoplasm. It carries out the reaction (2R,3S)-3-isopropylmalate + NAD(+) = 4-methyl-2-oxopentanoate + CO2 + NADH. Its pathway is amino-acid biosynthesis; L-leucine biosynthesis; L-leucine from 3-methyl-2-oxobutanoate: step 3/4. Its function is as follows. Catalyzes the oxidation of 3-carboxy-2-hydroxy-4-methylpentanoate (3-isopropylmalate) to 3-carboxy-4-methyl-2-oxopentanoate. The product decarboxylates to 4-methyl-2 oxopentanoate. The protein is 3-isopropylmalate dehydrogenase (LEU2) of Candida glabrata (strain ATCC 2001 / BCRC 20586 / JCM 3761 / NBRC 0622 / NRRL Y-65 / CBS 138) (Yeast).